The primary structure comprises 682 residues: MIDRYKHQQLRIGSVSPQQISAWANKILPNGEIIGEVTKPYTFHYKTNKPEKDGLFCERIFGPIKSGICACGNYRVIGDEKDDPKFCEQCGVEFVDSRIRRYQMGYIKLACPVTHVWYLKRLPSYIANLLDKPLKELEGLVYCDFSFARPIEKKPTFLRLRGSFEYEIQSWKYSIPLFFTTQGFDTFRNREISTGAGAIREQLDDLDLRIIIDYSLVEWKELGEEGPTGNEWEDRKIGRRKDFLVRRMELAKHFIRTNIEPEWMVLCLLPVLPPELRPIIQIDGGKLMSSDINELYRRVIYRNNTLTDLLTTSRSTPGELVMCQEKLVQEAVDTLLDNGIRGQPMRDGHNKVYKSFSDVIEGKEGRFRETLLGKRVDYSGRSVIVVGPSLSLHQCGLPREIAIELFQTFLIRGLIRQHLASNIGVAKSQIREKEPIVWEILQEVMRGHPVLLNRAPTLHRLGIQAFQPILVEGRAICLHPLVRKGFNADFDGDQMAVHVPLSLEAQSEARLLMFSHMNLLSPAIGDPISVPTQDMLIGLYVLTSGNRRGICANRYNPCNRRNYQNERIDDNNYRYTKEKEPFFCNSYDAIGAYRHKRINLYSPLWLRWQLDQRLIASKEAPIEVHYESLGTYHEIYGHYLIVRSVKKEIPCIYIRTTVGHISLYREIEEAIQGFCRACSYET.

4 residues coordinate Zn(2+): Cys69, Cys71, Cys87, and Cys90. Mg(2+) contacts are provided by Asp489, Asp491, and Asp493.

Belongs to the RNA polymerase beta' chain family. RpoC1 subfamily. In terms of assembly, in plastids the minimal PEP RNA polymerase catalytic core is composed of four subunits: alpha, beta, beta', and beta''. When a (nuclear-encoded) sigma factor is associated with the core the holoenzyme is formed, which can initiate transcription. Mg(2+) serves as cofactor. The cofactor is Zn(2+).

It is found in the plastid. It localises to the chloroplast. The catalysed reaction is RNA(n) + a ribonucleoside 5'-triphosphate = RNA(n+1) + diphosphate. Functionally, DNA-dependent RNA polymerase catalyzes the transcription of DNA into RNA using the four ribonucleoside triphosphates as substrates. The protein is DNA-directed RNA polymerase subunit beta' of Vitis vinifera (Grape).